A 295-amino-acid chain; its full sequence is Cytidine deaminase (295 aa).

CMP/dCMP-type deaminase domains are found at residues 48–168 and 187–295; these read ADDE…FGPA and EETT…YLAI. 89-91 serves as a coordination point for substrate; sequence NLE. Histidine 102 provides a ligand contact to Zn(2+). Glutamate 104 functions as the Proton donor in the catalytic mechanism. Residues cysteine 129 and cysteine 132 each coordinate Zn(2+).

Belongs to the cytidine and deoxycytidylate deaminase family. Homodimer. Zn(2+) serves as cofactor.

It carries out the reaction cytidine + H2O + H(+) = uridine + NH4(+). The enzyme catalyses 2'-deoxycytidine + H2O + H(+) = 2'-deoxyuridine + NH4(+). In terms of biological role, this enzyme scavenges exogenous and endogenous cytidine and 2'-deoxycytidine for UMP synthesis. The polypeptide is Cytidine deaminase (Vibrio atlanticus (strain LGP32) (Vibrio splendidus (strain Mel32))).